The sequence spans 1387 residues: Mediator of RNA polymerase II transcription subunit 13 (1387 aa).

Disordered regions lie at residues 81–102 (ELNN…PEFS), 354–400 (HSAN…ESYS), and 620–676 (SVNS…DIPM). Polar residues-rich tracts occupy residues 354–367 (HSAN…STGE) and 390–400 (SRQNFPTESYS).

The protein belongs to the Mediator complex subunit 13 family. Component of the SRB8-11 complex, which itself associates with the Mediator complex.

It localises to the nucleus. Functionally, component of the SRB8-11 complex. The SRB8-11 complex is a regulatory module of the Mediator complex which is itself involved in regulation of basal and activated RNA polymerase II-dependent transcription. The SRB8-11 complex may be involved in the transcriptional repression of a subset of genes regulated by Mediator. It may inhibit the association of the Mediator complex with RNA polymerase II to form the holoenzyme complex. The sequence is that of Mediator of RNA polymerase II transcription subunit 13 (SSN2) from Kluyveromyces lactis (strain ATCC 8585 / CBS 2359 / DSM 70799 / NBRC 1267 / NRRL Y-1140 / WM37) (Yeast).